Reading from the N-terminus, the 698-residue chain is MTIFRPHLRFLFKPHFLYFQSPIGKSSRPFSTSQILRTALDMPPPPVDTTQRLAKLRELMAQNKVDVYSMQFRYTIKAPLIITVVYSFFFFLLLALKLCLRKTAISQSTLLHVTGVETLIRITAAFISSFTGSAGCAIVSMSKAALSTDGRYFSQAAKQLDANWTLLKRGVEGVPTWEEWTAEQAENGKVVGVDPSLITAGENLQYSPLTSVIVVNCSYVIADARKLSQTLKTTGGSLIGIDQNLIDAVWGDERPARPANQITVQPVERAGKSFEEKVEDLRKELAAKKRSAMVISTLDEIAWLFNLRGSDIPYNPVFFSYAIVTPSVAELYVDESKLSPEARKHLEGKVILKPYDSIFQASKVLAESKASASSGSSGKFLLSNKASWSLSLALGGEQNVVEVRSPITDAKAIKNEVELEGFRKCHIRDGAALIEYFAWLENALIKEGAQLDEVDGADKLFEIRKKYDLFVGNSFDTISSTGANGATIHYKPEKSTCAVIDPEAMYLCDSGGQYLDGTTDTTRTLHFGEPTEFQKKAYALVLKGHISIDNAIFPKGTTGYAIDSFARQHLWKEGLDYLHGTGHGVGSFLYAEVPLSANNVLSNEPGYYEDGNFGIRLENLVICKEVQTAHKFGDKPFLGFESITLVPFCQKLLDASLLTEAERKWVNDYHARVWEKTSPFFEKDELTTAWLKRETQPI.

Positions 509, 520, 604, and 618 each coordinate Mn(2+).

Belongs to the peptidase M24B family. It depends on Mn(2+) as a cofactor.

It catalyses the reaction Release of any N-terminal amino acid, including proline, that is linked to proline, even from a dipeptide or tripeptide.. Functionally, catalyzes the removal of a penultimate prolyl residue from the N-termini of peptides. The sequence is that of Probable Xaa-Pro aminopeptidase P (AMPP) from Arthroderma benhamiae (strain ATCC MYA-4681 / CBS 112371) (Trichophyton mentagrophytes).